The sequence spans 419 residues: MGMTMTQKILADHAGLDKVSPGQLIKAKLDMVLGNDITTPVAVKEFRKIGVNKVFDVNKIAIVPDHFTPNKDIKSAEQVKFIREFAREMGIVNFFEVGQMGVEHALLPEKGLVVPGDVVIGADSHTCTYGALGAFSTGIGSTDMAAGMATGEAWFKVPEAMKFVLKGKPGKWVSGKDIILHIIGMIGVDGALYRSMEFTGDGVAHLSMDDRFAMANMAIEAGAKNGIFEVDEKTIEYVKEHSTRQYKVYKADEDAEYVATYEIDLSQVKPTVAFPHLPSNTRTIDNVGNIKIDQVVIGSCTNGRIEDLRVAAEVLKGRKVHKDVRCIIIPATQKIWKQAMNEGLFDIFIDAGAAVSTPTCGPCLGGHMGILAKGERAVATTNRNFVGRMGHPESEIYLASPAVAAASAVLGRIGSPDEL.

[4Fe-4S] cluster is bound by residues Cys-300, Cys-360, and Cys-363.

It belongs to the aconitase/IPM isomerase family. LeuC type 2 subfamily. Heterodimer of LeuC and LeuD. The cofactor is [4Fe-4S] cluster.

It carries out the reaction (2R,3S)-3-isopropylmalate = (2S)-2-isopropylmalate. It participates in amino-acid biosynthesis; L-leucine biosynthesis; L-leucine from 3-methyl-2-oxobutanoate: step 2/4. Catalyzes the isomerization between 2-isopropylmalate and 3-isopropylmalate, via the formation of 2-isopropylmaleate. The sequence is that of 3-isopropylmalate dehydratase large subunit from Acetivibrio thermocellus (strain ATCC 27405 / DSM 1237 / JCM 9322 / NBRC 103400 / NCIMB 10682 / NRRL B-4536 / VPI 7372) (Clostridium thermocellum).